Consider the following 849-residue polypeptide: Disks large homolog 3 (849 aa).

The segment at 32–101 is disordered; that stretch reads DWQVPDPYGP…GKSTPKLNGS (70 aa). The span at 41-53 shows a compositional bias: gly residues; that stretch reads PSGGNGASSGYGG. Polar residues predominate over residues 57–69; it reads QTLPSQAGATPTP. PDZ domains lie at 149-235, 244-330, and 404-484; these read EIVL…VRRR, EVNL…VAKP, and KIIL…AQYR. S157 bears the Phosphoserine mark. One can recognise an SH3 domain in the interval 519–589; it reads KRSLYVRALF…PSKKRVEKKE (71 aa). The Guanylate kinase-like domain occupies 659–834; the sequence is ARPVIILGPM…IYNKIKQIIE (176 aa). Y705 carries the post-translational modification Phosphotyrosine.

It belongs to the MAGUK family. In terms of assembly, interacts through its PDZ domains with NETO1, GRIN2B, SYNGAP1 and APC. Interacts through its first two PDZ domains with ERBB4. Interacts through its third PDZ domain with NLGN1, and probably with NLGN2 and NLGN3. Interacts through its guanylate kinase-like domain with DLGAP1, DLGAP2, DLGAP3 and DLGAP4. Interacts with FRMPD4 (via C-terminus). Interacts with LRFN1, LRFN2 and LRFN4. Interacts with FLTP. Interacts with GPR85. Interacts with DGKI (via PDZ-binding motif).

Its function is as follows. Required for learning most likely through its role in synaptic plasticity following NMDA receptor signaling. This Mus musculus (Mouse) protein is Disks large homolog 3 (Dlg3).